A 302-amino-acid chain; its full sequence is Sulfate adenylyltransferase subunit 2 (302 aa).

This sequence belongs to the PAPS reductase family. CysD subfamily. Heterodimer composed of CysD, the smaller subunit, and CysN.

It catalyses the reaction sulfate + ATP + H(+) = adenosine 5'-phosphosulfate + diphosphate. It participates in sulfur metabolism; hydrogen sulfide biosynthesis; sulfite from sulfate: step 1/3. With CysN forms the ATP sulfurylase (ATPS) that catalyzes the adenylation of sulfate producing adenosine 5'-phosphosulfate (APS) and diphosphate, the first enzymatic step in sulfur assimilation pathway. APS synthesis involves the formation of a high-energy phosphoric-sulfuric acid anhydride bond driven by GTP hydrolysis by CysN coupled to ATP hydrolysis by CysD. The chain is Sulfate adenylyltransferase subunit 2 from Baumannia cicadellinicola subsp. Homalodisca coagulata.